We begin with the raw amino-acid sequence, 504 residues long: L-carnitine/gamma-butyrobetaine antiporter (504 aa).

The next 12 membrane-spanning stretches (helical) occupy residues 10-30, 51-71, 92-112, 143-163, 195-215, 231-251, 263-283, 316-336, 347-367, 398-418, 446-466, and 475-495; these read IEPK…WLTV, WGWA…WLVF, IFMM…SIEI, GPLP…FFFV, FYLV…TPLV, LDAI…ACGL, SYLS…SFIM, WTVF…IFLA, LCFG…TVLG, WAAL…CFIA, LLVR…LLAL, and AIIA…LSFI.

The protein belongs to the BCCT transporter (TC 2.A.15) family. CaiT subfamily. In terms of assembly, homotrimer.

The protein resides in the cell inner membrane. The enzyme catalyses 4-(trimethylamino)butanoate(in) + (R)-carnitine(out) = 4-(trimethylamino)butanoate(out) + (R)-carnitine(in). It participates in amine and polyamine metabolism; carnitine metabolism. Functionally, catalyzes the exchange of L-carnitine for gamma-butyrobetaine. This is L-carnitine/gamma-butyrobetaine antiporter from Escherichia coli (strain K12 / MC4100 / BW2952).